Reading from the N-terminus, the 262-residue chain is Flap endonuclease Xni (262 aa).

D105 lines the Mg(2+) pocket. The 98-residue stretch at 162-259 folds into the 5'-3' exonuclease domain; the sequence is ERSQFLDLMA…VIDSQPEKTI (98 aa). K(+) is bound by residues L172, A173, P181, I183, and I186. The segment at 185 to 190 is interaction with DNA; that stretch reads GIGPKS.

The protein belongs to the Xni family. It depends on Mg(2+) as a cofactor. K(+) is required as a cofactor.

Its function is as follows. Has flap endonuclease activity. During DNA replication, flap endonucleases cleave the 5'-overhanging flap structure that is generated by displacement synthesis when DNA polymerase encounters the 5'-end of a downstream Okazaki fragment. The chain is Flap endonuclease Xni from Shewanella baltica (strain OS185).